A 190-amino-acid chain; its full sequence is MAFTSLLGSDAERKVAVAEVALRAVLCGLGALAAALVATDTQTRTFFSLQKKATYTDMKAMVLLVAAAAAAAGYSLLQAARCCCCVALLRTSIRPRARLLLAWCVFACDQALAYALLAAVVAALQASVVAKQGLPQLQWMAICALYGAFCRQAGAGVACAVAAAVDAALLAFLSAFNLFRLYGAKATTTT.

Topologically, residues 1–16 (MAFTSLLGSDAERKVA) are cytoplasmic. The chain crosses the membrane as a helical span at residues 17–37 (VAEVALRAVLCGLGALAAALV). The Extracellular segment spans residues 38 to 59 (ATDTQTRTFFSLQKKATYTDMK). The helical transmembrane segment at 60-80 (AMVLLVAAAAAAAGYSLLQAA) threads the bilayer. Residues 81-100 (RCCCCVALLRTSIRPRARLL) lie on the Cytoplasmic side of the membrane. Residues 101–121 (LAWCVFACDQALAYALLAAVV) traverse the membrane as a helical segment. Over 122–152 (AALQASVVAKQGLPQLQWMAICALYGAFCRQ) the chain is Extracellular. Residues 153–173 (AGAGVACAVAAAVDAALLAFL) traverse the membrane as a helical segment. At 174-190 (SAFNLFRLYGAKATTTT) the chain is on the cytoplasmic side.

The protein belongs to the Casparian strip membrane proteins (CASP) family. Homodimer and heterodimers.

The protein localises to the cell membrane. The sequence is that of CASP-like protein 2U1 from Zea mays (Maize).